Reading from the N-terminus, the 288-residue chain is Diaminopimelate epimerase (288 aa).

Asparagine 14 and asparagine 67 together coordinate substrate. Catalysis depends on cysteine 76, which acts as the Proton donor. Residues 77 to 78, asparagine 166, asparagine 199, and 217 to 218 contribute to the substrate site; these read GN and ER. Cysteine 226 (proton acceptor) is an active-site residue. 227–228 provides a ligand contact to substrate; the sequence is GT.

The protein belongs to the diaminopimelate epimerase family. Homodimer.

Its subcellular location is the cytoplasm. The catalysed reaction is (2S,6S)-2,6-diaminopimelate = meso-2,6-diaminopimelate. The protein operates within amino-acid biosynthesis; L-lysine biosynthesis via DAP pathway; DL-2,6-diaminopimelate from LL-2,6-diaminopimelate: step 1/1. Its function is as follows. Catalyzes the stereoinversion of LL-2,6-diaminopimelate (L,L-DAP) to meso-diaminopimelate (meso-DAP), a precursor of L-lysine and an essential component of the bacterial peptidoglycan. The polypeptide is Diaminopimelate epimerase (Bacillus cereus (strain 03BB102)).